The following is an 88-amino-acid chain: Small ribosomal subunit protein uS15 (88 aa).

It belongs to the universal ribosomal protein uS15 family. In terms of assembly, part of the 30S ribosomal subunit. Forms a bridge to the 50S subunit in the 70S ribosome, contacting the 23S rRNA.

One of the primary rRNA binding proteins, it binds directly to 16S rRNA where it helps nucleate assembly of the platform of the 30S subunit by binding and bridging several RNA helices of the 16S rRNA. In terms of biological role, forms an intersubunit bridge (bridge B4) with the 23S rRNA of the 50S subunit in the ribosome. The sequence is that of Small ribosomal subunit protein uS15 from Syntrophus aciditrophicus (strain SB).